The sequence spans 415 residues: Putative O-antigen transporter (415 aa).

Residues 1–11 (MNTNKLSLRRN) lie on the Cytoplasmic side of the membrane. A helical membrane pass occupies residues 12–32 (VIYLAVVQGSNYLLPLLTFPY). Residues 33 to 41 (LVRTLGPEN) lie on the Periplasmic side of the membrane. The chain crosses the membrane as a helical span at residues 42–62 (FGIFGFCQATMLYMIMFVEYG). The Cytoplasmic portion of the chain corresponds to 63 to 83 (FNLTATQSIAKAADSKDKVTS). Residues 84 to 104 (IFWAVIFSKIVLIVITLIFLT) traverse the membrane as a helical segment. Residues 105-117 (SMTLLVPEYNKHA) are Periplasmic-facing. Residues 118–138 (VIIWSFVPALVGNLIYPIWLF) form a helical membrane-spanning segment. The Cytoplasmic segment spans residues 139–173 (QGKEKMKWLTLSSILSRLAIIPLTFIFVNTKSDIA). The helical transmembrane segment at 174-194 (IAGFIQSSANLVAGIIALAIV) threads the bilayer. The Periplasmic segment spans residues 195 to 220 (VHEGWIGKVTLSLHNVRRSLADGFHV). Residues 221–241 (FISTSAISLYSTGIVIILGFI) traverse the membrane as a helical segment. The Cytoplasmic segment spans residues 242 to 295 (SGPTSVGNFNAANTIRNALQGLLNPITQAIYPRISSTLVLNRVKGVILIKKSLT). Residues 296 to 316 (CLSLIGGAFSLILLLGASILV) traverse the membrane as a helical segment. Residues 317–328 (KISIGPGYDNAV) lie on the Periplasmic side of the membrane. The helical transmembrane segment at 329-349 (IVLMIISPLPFLISLSNVYGI) threads the bilayer. Residues 350-362 (QVMLTHNYKKEFS) lie on the Cytoplasmic side of the membrane. Residues 363-383 (KILIAAGLLSLLLIFPLTTLF) form a helical membrane-spanning segment. The Periplasmic portion of the chain corresponds to 384-385 (KE). The chain crosses the membrane as a helical span at residues 386–406 (IGAAITLLATECLVTSLMLMF). Over 407 to 415 (VRNNKLLVC) the chain is Cytoplasmic.

It belongs to the polysaccharide synthase family.

The protein localises to the cell inner membrane. Its pathway is bacterial outer membrane biogenesis; LPS O-antigen biosynthesis. May be involved in the translocation process of the nascent O-polysaccharide molecules and/or its ligation to lipid A core units. This chain is Putative O-antigen transporter (rfbX), found in Escherichia coli (strain K12).